Consider the following 194-residue polypeptide: Cysteine and glycine-rich protein 3 (194 aa).

The tract at residues 1-5 (MPNWG) is interaction with TCAP. Positions 10–61 (CGACEKTVYHAEEIQCNGRSFHKTCFHCMACRKALDSTTVAAHESEIYCKVC) constitute an LIM zinc-binding 1 domain. The short motif at 64-69 (RRYGPK) is the Nuclear localization signal element. Positions 94-106 (QSPKQARSATTSS) are interaction with CLF2. A phosphoserine mark is found at Ser-95 and Ser-153. Residues 120 to 171 (CPRCGKSVYAAEKVMGGGKPWHKTCFRCAICGKSLESTNVTDKDGELYCKVC) enclose the LIM zinc-binding 2 domain.

Self-associates. Oligomeric in the cytoplasm and monomeric in the nucleus. Homooligomers preferentially form along the actin cytoskeleton. Interacts with TCAP, LDHD, MYOD1, MYOG, ACTN2, NRAP, MYF6. Interacts (via N-terminus) with GLRX3 (via C-terminus) and PPP3CA; GLRX3 and calcineurin compete for interaction with CSRP3. Interacts with CFL2; the stoichiometry influences F-actin depolymerization and possibly two molecules of CFL2 can interact with one molecule of CSRP3 resulting in the highest functional impact; the interaction is stronger with phosphorylated CFL2.

It localises to the nucleus. The protein resides in the cytoplasm. Its subcellular location is the cytoskeleton. It is found in the myofibril. The protein localises to the sarcomere. It localises to the z line. In terms of biological role, positive regulator of myogenesis. Acts as a cofactor for myogenic bHLH transcription factors such as MYOD1, and probably MYOG and MYF6. Enhances the DNA-binding activity of the MYOD1:TCF3 isoform E47 complex and may promote formation of a functional MYOD1:TCF3 isoform E47:MEF2A complex involved in myogenesis. Plays a crucial and specific role in the organization of cytosolic structures in cardiomyocytes. Could play a role in mechanical stretch sensing. May be a scaffold protein that promotes the assembly of interacting proteins at Z-line structures. It is essential for calcineurin anchorage to the Z line. Required for stress-induced calcineurin-NFAT activation. The role in regulation of cytoskeleton dynamics by association with CFL2 is reported conflictingly. Proposed to contribute to the maintenance of muscle cell integrity through an actin-based mechanism. Can directly bind to actin filaments, cross-link actin filaments into bundles without polarity selectivity and protect them from dilution- and cofilin-mediated depolymerization; the function seems to involve its self-association. In vitro can inhibit PKC/PRKCA activity. Proposed to be involved in cardiac stress signaling by down-regulating excessive PKC/PRKCA signaling. This is Cysteine and glycine-rich protein 3 (CSRP3) from Bos taurus (Bovine).